Here is a 244-residue protein sequence, read N- to C-terminus: MERYDDDALVLSSVDYGESDRLVTLLTREHGKLTAFAAGARKSKRRFAGALEPFMRLRVHIVETRGSTVRLDGTDIVAGFYAAREDLSLIARALYAVELCRELTRDHEPQPELFALLESYLTRLDAKEAGPTSLLAFELSALAHAGLMPRFDSCSLCGGAPGERPRFDQAHGGAVCEPCGVRARESVAVPVALLSGLRALQEGARTPLPPELRARARGLLNVFIAHHLGRRLKSVDFMAQVGLD.

It belongs to the RecO family.

Functionally, involved in DNA repair and RecF pathway recombination. In Myxococcus xanthus (strain DK1622), this protein is DNA repair protein RecO.